The chain runs to 260 residues: Putative ABC transporter ATP-binding protein (260 aa).

One can recognise an ABC transporter domain in the interval 4–243 (ISMKNVTLKK…QVLENFYESP (240 aa)). An ATP-binding site is contributed by 36 to 43 (GLNGSGKT).

The protein belongs to the ABC transporter superfamily.

The sequence is that of Putative ABC transporter ATP-binding protein (abcX) from Streptococcus mutans serotype c (strain ATCC 700610 / UA159).